A 647-amino-acid chain; its full sequence is DNA mismatch repair protein MutL (647 aa).

Belongs to the DNA mismatch repair MutL/HexB family.

Functionally, this protein is involved in the repair of mismatches in DNA. It is required for dam-dependent methyl-directed DNA mismatch repair. May act as a 'molecular matchmaker', a protein that promotes the formation of a stable complex between two or more DNA-binding proteins in an ATP-dependent manner without itself being part of a final effector complex. The chain is DNA mismatch repair protein MutL from Koribacter versatilis (strain Ellin345).